Consider the following 243-residue polypeptide: Triosephosphate isomerase (243 aa).

Position 9 to 11 (9 to 11 (NWK)) interacts with substrate. The active-site Electrophile is the His-98. Glu-167 acts as the Proton acceptor in catalysis. Substrate contacts are provided by residues Gly-173, Ser-205, and 226–227 (GG).

This sequence belongs to the triosephosphate isomerase family. In terms of assembly, homodimer.

It is found in the cytoplasm. The catalysed reaction is D-glyceraldehyde 3-phosphate = dihydroxyacetone phosphate. Its pathway is carbohydrate biosynthesis; gluconeogenesis. It participates in carbohydrate degradation; glycolysis; D-glyceraldehyde 3-phosphate from glycerone phosphate: step 1/1. Its function is as follows. Involved in the gluconeogenesis. Catalyzes stereospecifically the conversion of dihydroxyacetone phosphate (DHAP) to D-glyceraldehyde-3-phosphate (G3P). This Mesomycoplasma hyorhinis (Mycoplasma hyorhinis) protein is Triosephosphate isomerase.